A 265-amino-acid polypeptide reads, in one-letter code: 6-carboxyhexanoate--CoA ligase (265 aa).

This sequence belongs to the BioW family. Homodimer. Mg(2+) is required as a cofactor.

The enzyme catalyses heptanedioate + ATP + CoA = 6-carboxyhexanoyl-CoA + AMP + diphosphate. Its pathway is metabolic intermediate metabolism; pimeloyl-CoA biosynthesis; pimeloyl-CoA from pimelate: step 1/1. Its function is as follows. Catalyzes the transformation of pimelate into pimeloyl-CoA with concomitant hydrolysis of ATP to AMP. This is 6-carboxyhexanoate--CoA ligase from Syntrophotalea carbinolica (strain DSM 2380 / NBRC 103641 / GraBd1) (Pelobacter carbinolicus).